A 541-amino-acid polypeptide reads, in one-letter code: T-complex protein 1 subunit epsilon (541 aa).

N-acetylalanine is present on Ala-2. Lys-20 participates in a covalent cross-link: Glycyl lysine isopeptide (Lys-Gly) (interchain with G-Cter in SUMO2). Ser-26 is subject to Phosphoserine. Residue Gly-53 coordinates ADP. ATP is bound at residue Gly-53. Asp-104 contacts Mg(2+). ADP contacts are provided by Gly-105, Thr-106, Thr-107, and Ser-175. Residues Thr-106 and Thr-107 each contribute to the ATP site. Residues Lys-210, Lys-214, Lys-265, Lys-275, and Lys-279 each participate in a glycyl lysine isopeptide (Lys-Gly) (interchain with G-Cter in SUMO2) cross-link. At Ser-346 the chain carries Phosphoserine. Lys-392 is covalently cross-linked (Glycyl lysine isopeptide (Lys-Gly) (interchain with G-Cter in SUMO2)). Residues Gly-422, Asp-492, Glu-508, and Lys-513 each contribute to the ADP site. Gly-422 contacts ATP. Phosphoserine is present on Ser-539.

It belongs to the TCP-1 chaperonin family. In terms of assembly, component of the chaperonin-containing T-complex (TRiC), a hexadecamer composed of two identical back-to-back stacked rings enclosing a protein folding chamber. Each ring is made up of eight different subunits: TCP1/CCT1, CCT2, CCT3, CCT4, CCT5, CCT6A/CCT6, CCT7, CCT8. Interacts with PACRG. Interacts with DNAAF4. Interacts with DLEC1. Interacts with SPMAP2. Post-translationally, ubiquitinated by the DCX(DCAF12) complex specifically recognizes the diglutamate (Glu-Glu) at the C-terminus, leading to its degradation.

It localises to the cytoplasm. The protein localises to the cytoskeleton. The protein resides in the microtubule organizing center. Its subcellular location is the centrosome. The catalysed reaction is ATP + H2O = ADP + phosphate + H(+). Component of the chaperonin-containing T-complex (TRiC), a molecular chaperone complex that assists the folding of actin, tubulin and other proteins upon ATP hydrolysis. The TRiC complex mediates the folding of WRAP53/TCAB1, thereby regulating telomere maintenance. As part of the TRiC complex may play a role in the assembly of BBSome, a complex involved in ciliogenesis regulating transports vesicles to the cilia. The sequence is that of T-complex protein 1 subunit epsilon (Cct5) from Rattus norvegicus (Rat).